Consider the following 409-residue polypeptide: Peptidase T (409 aa).

Zn(2+) is bound at residue H79. Residue D81 is part of the active site. D140 provides a ligand contact to Zn(2+). The active-site Proton acceptor is E174. Zn(2+)-binding residues include E175, D197, and H379.

The protein belongs to the peptidase M20B family. It depends on Zn(2+) as a cofactor.

The protein resides in the cytoplasm. It catalyses the reaction Release of the N-terminal residue from a tripeptide.. Its function is as follows. Cleaves the N-terminal amino acid of tripeptides. This chain is Peptidase T, found in Lysinibacillus sphaericus (strain C3-41).